The following is a 638-amino-acid chain: Methionine--tRNA ligase (638 aa).

The 'HIGH' region signature appears at 12-22 (YYPSDKLHIGH). Zn(2+)-binding residues include Cys127, Cys130, Cys144, and Cys147. The 'KMSKS' region motif lies at 296–300 (KMSKS). ATP is bound at residue Lys299. The region spanning 538–638 (DFSKVQLRVA…KDIESGSKIS (101 aa)) is the tRNA-binding domain.

Belongs to the class-I aminoacyl-tRNA synthetase family. MetG type 2A subfamily. Homodimer. Requires Zn(2+) as cofactor.

It is found in the cytoplasm. The catalysed reaction is tRNA(Met) + L-methionine + ATP = L-methionyl-tRNA(Met) + AMP + diphosphate. In terms of biological role, is required not only for elongation of protein synthesis but also for the initiation of all mRNA translation through initiator tRNA(fMet) aminoacylation. The sequence is that of Methionine--tRNA ligase (metG) from Caldanaerobacter subterraneus subsp. tengcongensis (strain DSM 15242 / JCM 11007 / NBRC 100824 / MB4) (Thermoanaerobacter tengcongensis).